A 118-amino-acid polypeptide reads, in one-letter code: Class I hydrophobin hum2 (118 aa).

The N-terminal stretch at 1–19 (MQFKTIFATLAAFAAVASA) is a signal peptide. 4 cysteine pairs are disulfide-bonded: cysteine 33/cysteine 98, cysteine 40/cysteine 92, cysteine 41/cysteine 74, and cysteine 99/cysteine 112.

Belongs to the fungal hydrophobin family. As to quaternary structure, self-assembles to form functional amyloid fibrils called rodlets. Self-assembly into fibrillar rodlets occurs spontaneously at hydrophobic:hydrophilic interfaces and the rodlets further associate laterally to form amphipathic monolayers.

Its subcellular location is the secreted. The protein localises to the cell wall. Functionally, aerial growth, conidiation, and dispersal of filamentous fungi in the environment rely upon a capability of their secreting small amphipathic proteins called hydrophobins (HPBs) with low sequence identity. Class I can self-assemble into an outermost layer of rodlet bundles on aerial cell surfaces, conferring cellular hydrophobicity that supports fungal growth, development and dispersal; whereas Class II form highly ordered films at water-air interfaces through intermolecular interactions but contribute nothing to the rodlet structure. Hum2 is a class I hydrophobin which that plays a role in, but seems not to be crucial for the formation of aerial hyphae. Hydrophobins of Mycosarcoma maydis have been functionally replaced, at least partially, by repellents. This Mycosarcoma maydis (Corn smut fungus) protein is Class I hydrophobin hum2.